The primary structure comprises 333 residues: Syntaxin-4 (333 aa).

Over 1 to 312 (MGKDRLPELL…QHQKKARKKK (312 aa)) the chain is Cytoplasmic. A compositionally biased stretch (low complexity) spans 50 to 66 (YSVVSQNSHSCSNNNSS). A disordered region spans residues 50–81 (YSVVSQNSHSCSNNNSSTEPKDRSSSKMTQYG). The stretch at 91–116 (YTEIRQQLAQIAANLETMNRMAQTVN) forms a coiled coil. The 63-residue stretch at 239–301 (LREMMDRFNE…DKGADELDQA (63 aa)) folds into the t-SNARE coiled-coil homology domain. A helical; Anchor for type IV membrane protein membrane pass occupies residues 313–333 (IMLIVILAAVLLVLLLVGIYL).

The protein belongs to the syntaxin family.

The protein localises to the membrane. Its function is as follows. Potentially involved in docking of synaptic vesicles at presynaptic active zones. The chain is Syntaxin-4 from Drosophila melanogaster (Fruit fly).